Consider the following 464-residue polypeptide: Soluble pyridine nucleotide transhydrogenase (464 aa).

35–44 provides a ligand contact to FAD; sequence DSRRQVGGNC.

The protein belongs to the class-I pyridine nucleotide-disulfide oxidoreductase family. FAD serves as cofactor.

It is found in the cytoplasm. It catalyses the reaction NAD(+) + NADPH = NADH + NADP(+). Its function is as follows. Conversion of NADPH, generated by peripheral catabolic pathways, to NADH, which can enter the respiratory chain for energy generation. The sequence is that of Soluble pyridine nucleotide transhydrogenase from Pseudomonas entomophila (strain L48).